The primary structure comprises 1170 residues: Disease resistance protein LAZ5 (1170 aa).

A TIR domain is found at 10 to 172; sequence ESWQVFINFR…KIIDSIKKVL (163 aa). The active site involves glutamate 84. A disordered region spans residues 193-219; it reads EAKNVDTFSPNSSDFPSTSIDDDLSIN. Polar residues predominate over residues 198–219; it reads DTFSPNSSDFPSTSIDDDLSIN. One can recognise an NB-ARC domain in the interval 261-513; that stretch reads RLKEMEEKLD…DVACFFKSEN (253 aa). 12 LRR repeats span residues 595–616, 622–645, 646–670, 677–700, 723–747, 761–785, 790–813, 815–837, 838–861, 862–885, 888–904, and 905–930; these read MENV…TFDG, MCNL…IFKF, DTVR…PWEK, PENL…VKDT, AKNL…MENM, LTCL…KLEE, SENL…AGDL, RLVV…LGKQ, KALQ…VKDM, KHLR…SLKC, LSRN…LKDF, and SNLK…CLEY.

The enzyme catalyses NAD(+) + H2O = ADP-D-ribose + nicotinamide + H(+). Functionally, TIR-NB-LRR receptor-like protein that may play a role in plant innate immunity. May trigger hypersensitive programmed cell death in response to pathogen attack. Involved in tolerance to tobacco ringspot virus (TRSV). The sequence is that of Disease resistance protein LAZ5 from Arabidopsis thaliana (Mouse-ear cress).